The chain runs to 276 residues: Omega-amidase NIT2-B (276 aa).

Residues 4 to 248 form the CN hydrolase domain; sequence FRLSLVQFLV…ETVISADIDL (245 aa). Glutamate 43 (proton acceptor) is an active-site residue. Catalysis depends on lysine 112, which acts as the Proton donor. Cysteine 153 functions as the Nucleophile in the catalytic mechanism.

This sequence belongs to the carbon-nitrogen hydrolase superfamily. NIT1/NIT2 family. In terms of assembly, homodimer.

It localises to the cytoplasm. It catalyses the reaction 2-oxoglutaramate + H2O = 2-oxoglutarate + NH4(+). It carries out the reaction 2-oxosuccinamate + H2O = oxaloacetate + NH4(+). In terms of biological role, has omega-amidase activity. The role of omega-amidase is to remove potentially toxic intermediates by converting 2-oxoglutaramate and 2-oxosuccinamate to biologically useful 2-oxoglutarate and oxaloacetate, respectively. The chain is Omega-amidase NIT2-B (nit2b) from Xenopus laevis (African clawed frog).